Reading from the N-terminus, the 243-residue chain is Uroporphyrinogen-III C-methyltransferase (243 aa).

S-adenosyl-L-homocysteine contacts are provided by residues Pro12, 88–90, 118–119, Met166, and Ala195; these read SGD and ST.

This sequence belongs to the precorrin methyltransferase family.

It carries out the reaction uroporphyrinogen III + 2 S-adenosyl-L-methionine = precorrin-2 + 2 S-adenosyl-L-homocysteine + H(+). It participates in cofactor biosynthesis; adenosylcobalamin biosynthesis; precorrin-2 from uroporphyrinogen III: step 1/1. Its pathway is porphyrin-containing compound metabolism; siroheme biosynthesis; precorrin-2 from uroporphyrinogen III: step 1/1. In terms of biological role, catalyzes the two successive C-2 and C-7 methylation reactions involved in the conversion of uroporphyrinogen III to precorrin-2 via the intermediate formation of precorrin-1. It is a step in the biosynthesis of both cobalamin (vitamin B12) and siroheme. This Synechococcus elongatus (strain ATCC 33912 / PCC 7942 / FACHB-805) (Anacystis nidulans R2) protein is Uroporphyrinogen-III C-methyltransferase.